Here is a 92-residue protein sequence, read N- to C-terminus: Large ribosomal subunit protein bL28 (92 aa).

This sequence belongs to the bacterial ribosomal protein bL28 family.

This is Large ribosomal subunit protein bL28 from Borreliella burgdorferi (strain ATCC 35210 / DSM 4680 / CIP 102532 / B31) (Borrelia burgdorferi).